Consider the following 229-residue polypeptide: Heptaprenylglyceryl phosphate synthase (229 aa).

Lysine 12 contributes to the sn-glycerol 1-phosphate binding site. Residues aspartate 14 and serine 40 each contribute to the Mg(2+) site. Residues 159–164, glycine 189, and 209–210 contribute to the sn-glycerol 1-phosphate site; these read YLEYSG and GN.

It belongs to the GGGP/HepGP synthase family. Group I subfamily. Homodimer. Mg(2+) serves as cofactor.

It catalyses the reaction sn-glycerol 1-phosphate + all-trans-heptaprenyl diphosphate = 3-heptaprenyl-sn-glycero-1-phosphate + diphosphate. Its pathway is membrane lipid metabolism; glycerophospholipid metabolism. In terms of biological role, prenyltransferase that catalyzes in vivo the transfer of the heptaprenyl moiety of heptaprenyl pyrophosphate (HepPP; 35 carbon atoms) to the C3 hydroxyl of sn-glycerol-1-phosphate (G1P), producing heptaprenylglyceryl phosphate (HepGP). This reaction is an ether-bond-formation step in the biosynthesis of archaea-type G1P-based membrane lipids found in Bacillales. This Bacillus anthracis (strain A0248) protein is Heptaprenylglyceryl phosphate synthase.